Consider the following 427-residue polypeptide: Glutamate-1-semialdehyde 2,1-aminomutase (427 aa).

Lys268 carries the N6-(pyridoxal phosphate)lysine modification.

Belongs to the class-III pyridoxal-phosphate-dependent aminotransferase family. HemL subfamily. It depends on pyridoxal 5'-phosphate as a cofactor.

It is found in the cytoplasm. The catalysed reaction is (S)-4-amino-5-oxopentanoate = 5-aminolevulinate. It functions in the pathway porphyrin-containing compound metabolism; protoporphyrin-IX biosynthesis; 5-aminolevulinate from L-glutamyl-tRNA(Glu): step 2/2. The chain is Glutamate-1-semialdehyde 2,1-aminomutase from Methanococcus maripaludis (strain DSM 14266 / JCM 13030 / NBRC 101832 / S2 / LL).